The chain runs to 489 residues: Membrane-bound acylglycerophosphatidylinositol O-acyltransferase frj (489 aa).

Transmembrane regions (helical) follow at residues 2-22, 40-60, and 75-95; these read SIDDVIYVICLLGCIGAGSYV, VLVVVIVSGLHSLHCFVSLAL, and LVTFAVMFGYLVFFRIFDFYF. Residues Asn-331 and His-364 contribute to the active site. The next 2 membrane-spanning stretches (helical) occupy residues 405 to 425 and 433 to 453; these read VIFWIFKWFAFSYLGEAFLLS and FYSSVYHIGYISWAAMTALGF.

This sequence belongs to the membrane-bound acyltransferase family.

It localises to the membrane. The catalysed reaction is a 1-acyl-sn-glycero-3-phospho-(1D-myo-inositol) + (5Z,8Z,11Z,14Z)-eicosatetraenoyl-CoA = a 1-acyl-2-(5Z,8Z,11Z,14Z-eicosatetraenoyl)-sn-glycero-3-phospho-(1D-myo-inositol) + CoA. It carries out the reaction a 1-acyl-sn-glycero-3-phosphocholine + an acyl-CoA = a 1,2-diacyl-sn-glycero-3-phosphocholine + CoA. The enzyme catalyses (9Z)-hexadecenoyl-CoA + 1-hexadecanoyl-sn-glycero-3-phosphocholine = 1-hexadecanoyl-2-(9Z-hexadecenoyl)-sn-glycero-3-phosphocholine + CoA. It catalyses the reaction a 1-acyl-sn-glycero-3-phospho-L-serine + an acyl-CoA = a 1,2-diacyl-sn-glycero-3-phospho-L-serine + CoA. The catalysed reaction is 1-(9Z-octadecenoyl)-sn-glycero-3-phospho-L-serine + (9Z)-hexadecenoyl-CoA = 1-(9Z-octadecenoyl)-2-(9Z-hexadecenoyl)-sn-glycero-3-phospho-L-serine + CoA. It carries out the reaction a 1-acyl-sn-glycero-3-phosphoethanolamine + an acyl-CoA = a 1,2-diacyl-sn-glycero-3-phosphoethanolamine + CoA. The enzyme catalyses 1-hexadecanoyl-sn-glycero-3-phosphoethanolamine + (9Z)-hexadecenoyl-CoA = 1-hexadecanoyl-2-(9Z)-hexadecenoyl-sn-glycero-3-phosphoethanolamine + CoA. Its pathway is lipid metabolism; phospholipid metabolism. Its function is as follows. Acyltransferase that mediates the acylation of lysophospholipids to produce phospholipids (glycerophospholipids). Highest activity with lysophosphatidylinositol (1-acyl-sn-glycero-3-phospho-(1D-myo-inositol) or LPI) producing phosphatidylinositol (1,2-diacyl-sn-glycero-3-phospho-(1D-myo-inositol) or PI) (LPIAT activity), but also converts lysophosphatidylcholine (1-acyl-sn-glycero-3-phosphocholine or LPC) to phosphatidylcholine (1,2-diacyl-sn-glycero-3-phosphocholine or PC) (LPCAT activity), lysophosphatidylserine (1-acyl-2-hydroxy-sn-glycero-3-phospho-L-serine or LPS) to phosphatidylserine (1,2-diacyl-sn-glycero-3-phospho-L-serine or PS) (LPSAT activity), and lysophosphatidylethanolamine (1-acyl-sn-glycero-3-phosphoethanolamine or LPE) producing phosphatidylethanolamine (1,2-diacyl-sn-glycero-3-phosphoethanolamine or PE) (LPEAT activity). Has a preference for unsaturated fatty acid arachidonoyl-CoA ((5Z,8Z,11Z,14Z)-eicosatetraenoyl-CoA). Glycerophospholipids are important structural and functional components of cellular membrane, acyl-chain remodeling regulates the molecular species distribution of glycerophospholipids which can affect membrane fluidity and curvature. The polypeptide is Membrane-bound acylglycerophosphatidylinositol O-acyltransferase frj (Drosophila melanogaster (Fruit fly)).